The following is a 674-amino-acid chain: Probable L-type lectin-domain containing receptor kinase II.1 (674 aa).

The signal sequence occupies residues 1–24 (MAGVLGSVVFWLIIGIHVTFLVFA). Residues 25–301 (QEGDHFVYYD…PSPKRFPLKE (277 aa)) lie on the Extracellular side of the membrane. A legume-lectin like region spans residues 28–274 (DHFVYYDFRN…NQYILGWSFK (247 aa)). Asn-57, Asn-117, Asn-133, Asn-185, Asn-210, and Asn-242 each carry an N-linked (GlcNAc...) asparagine glycan. The chain crosses the membrane as a helical span at residues 302 to 322 (VLGATISTIAFLTLGGIVYLY). Residues 323-674 (KKKKYAEVLE…EDVTVLFGGR (352 aa)) are Cytoplasmic-facing. Positions 355–633 (FRENQLLGAG…LEGNVSVPAI (279 aa)) constitute a Protein kinase domain. ATP-binding positions include 361–369 (LGAGGFGKV) and Lys-383. Asp-480 serves as the catalytic Proton acceptor.

It in the C-terminal section; belongs to the protein kinase superfamily. Ser/Thr protein kinase family. This sequence in the N-terminal section; belongs to the leguminous lectin family.

The protein localises to the cell membrane. The enzyme catalyses L-seryl-[protein] + ATP = O-phospho-L-seryl-[protein] + ADP + H(+). It carries out the reaction L-threonyl-[protein] + ATP = O-phospho-L-threonyl-[protein] + ADP + H(+). In Arabidopsis thaliana (Mouse-ear cress), this protein is Probable L-type lectin-domain containing receptor kinase II.1 (LECRK21).